The following is a 706-amino-acid chain: Glycine--tRNA ligase beta subunit (706 aa).

Belongs to the class-II aminoacyl-tRNA synthetase family. As to quaternary structure, tetramer of two alpha and two beta subunits.

It is found in the cytoplasm. It carries out the reaction tRNA(Gly) + glycine + ATP = glycyl-tRNA(Gly) + AMP + diphosphate. This chain is Glycine--tRNA ligase beta subunit, found in Hyphomonas neptunium (strain ATCC 15444).